Consider the following 249-residue polypeptide: Isoprenyl transferase (249 aa).

Residue D29 is part of the active site. D29 provides a ligand contact to Mg(2+). Substrate-binding positions include 30 to 33 (GNGR), W34, R42, H46, and 74 to 76 (STE). The active-site Proton acceptor is N77. Substrate is bound by residues W78, R80, R197, and 203–205 (RLS). Residue E216 coordinates Mg(2+).

It belongs to the UPP synthase family. In terms of assembly, homodimer. The cofactor is Mg(2+).

Its function is as follows. Catalyzes the condensation of isopentenyl diphosphate (IPP) with allylic pyrophosphates generating different type of terpenoids. This Gloeobacter violaceus (strain ATCC 29082 / PCC 7421) protein is Isoprenyl transferase.